The following is a 452-amino-acid chain: Caspase-2 (452 aa).

N-acetylalanine is present on Ala-2. The propeptide occupies 2–169 (AASSGRSQSS…TMEHSLDNGD (168 aa)). In terms of domain architecture, CARD spans 32-121 (MHPDHQETLK…GHLEDLLLTT (90 aa)). Position 157 is a phosphoserine (Ser-157). Active-site residues include His-277 and Cys-320. A propeptide spanning residues 326 to 333 (DRGVDQQD) is cleaved from the precursor. The span at 327–336 (RGVDQQDGKN) shows a compositional bias: basic and acidic residues. The tract at residues 327–349 (RGVDQQDGKNHAQSPGCEESDAG) is disordered. A Phosphoserine modification is found at Ser-340.

It belongs to the peptidase C14A family. Heterotetramer that consists of two anti-parallel arranged heterodimers, each one formed by a p18 subunit and a p12 subunit. Forms a complex named the PIDDosome with PIDD1 and CRADD. Interacts with NOL3 (via CARD domain); inhibits CASP2 activity in a phosphorylation-dependent manner. In terms of processing, the mature protease can process its own propeptide, but not that of other caspases.

The catalysed reaction is Strict requirement for an Asp residue at P1, with 316-Asp being essential for proteolytic activity and has a preferred cleavage sequence of Val-Asp-Val-Ala-Asp-|-.. Its function is as follows. Involved in the activation cascade of caspases responsible for apoptosis execution. Might function by either activating some proteins required for cell death or inactivating proteins necessary for cell survival. Associates with PIDD1 and CRADD to form the PIDDosome, a complex that activates CASP2 and triggers apoptosis in response to genotoxic stress. The protein is Caspase-2 (Casp2) of Rattus norvegicus (Rat).